Here is a 201-residue protein sequence, read N- to C-terminus: FMN-dependent NADH:quinone oxidoreductase (201 aa).

FMN contacts are provided by residues serine 10, 16 to 18 (SQS), 96 to 99 (MYNF), and 140 to 143 (SRGG).

It belongs to the azoreductase type 1 family. Homodimer. FMN is required as a cofactor.

The enzyme catalyses 2 a quinone + NADH + H(+) = 2 a 1,4-benzosemiquinone + NAD(+). It catalyses the reaction N,N-dimethyl-1,4-phenylenediamine + anthranilate + 2 NAD(+) = 2-(4-dimethylaminophenyl)diazenylbenzoate + 2 NADH + 2 H(+). Functionally, quinone reductase that provides resistance to thiol-specific stress caused by electrophilic quinones. Also exhibits azoreductase activity. Catalyzes the reductive cleavage of the azo bond in aromatic azo compounds to the corresponding amines. This chain is FMN-dependent NADH:quinone oxidoreductase, found in Escherichia coli O6:K15:H31 (strain 536 / UPEC).